Consider the following 88-residue polypeptide: Sec-independent protein translocase protein TatA (88 aa).

A helical membrane pass occupies residues 1 to 21 (MGGISIWQLLIIAVIVVLLFG). Residues 41–88 (KAMGDENQKETNNAEKTTNDADFDTKNLAQKTSTEEKSTTESKNKEQV) are disordered. Basic and acidic residues-rich tracts occupy residues 42–65 (AMGD…DFDT) and 73–88 (STEE…KEQV).

This sequence belongs to the TatA/E family. The Tat system comprises two distinct complexes: a TatABC complex, containing multiple copies of TatA, TatB and TatC subunits, and a separate TatA complex, containing only TatA subunits. Substrates initially bind to the TatABC complex, which probably triggers association of the separate TatA complex to form the active translocon.

It is found in the cell inner membrane. Functionally, part of the twin-arginine translocation (Tat) system that transports large folded proteins containing a characteristic twin-arginine motif in their signal peptide across membranes. TatA could form the protein-conducting channel of the Tat system. This is Sec-independent protein translocase protein TatA from Proteus mirabilis (strain HI4320).